We begin with the raw amino-acid sequence, 79 residues long: Conotoxin 12 (79 aa).

The N-terminal stretch at 1–22 (MKLTCVLIITVLFLTASQLITA) is a signal peptide. Residues 23–47 (DYSRDQRQYRAVRLGDEMRNFKGAR) constitute a propeptide that is removed on maturation. 3 disulfides stabilise this stretch: C49/C62, C56/C67, and C61/C77.

The protein belongs to the conotoxin O1 superfamily. Expressed by the venom duct.

It localises to the secreted. The sequence is that of Conotoxin 12 from Conus vexillum (Flag cone).